Here is a 172-residue protein sequence, read N- to C-terminus: Acetolactate synthase small subunit (172 aa).

Positions 4–78 (TLSVLVEDEA…NILKVDNITE (75 aa)) constitute an ACT domain.

Belongs to the acetolactate synthase small subunit family. Dimer of large and small chains.

The protein localises to the plastid. It localises to the chloroplast. The enzyme catalyses 2 pyruvate + H(+) = (2S)-2-acetolactate + CO2. It functions in the pathway amino-acid biosynthesis; L-isoleucine biosynthesis; L-isoleucine from 2-oxobutanoate: step 1/4. It participates in amino-acid biosynthesis; L-valine biosynthesis; L-valine from pyruvate: step 1/4. This Cyanidium caldarium (Red alga) protein is Acetolactate synthase small subunit (ilvH).